The chain runs to 415 residues: uncharacterized protein (415 aa).

Disordered regions lie at residues 329–351 (KFNK…TESS) and 388–415 (KSMM…IITL). A compositionally biased stretch (acidic residues) spans 338 to 348 (LQNESGDDSET). Positions 399 to 409 (KSNRKSNKRSN) are enriched in basic residues.

This is an uncharacterized protein from Acanthamoeba polyphaga mimivirus (APMV).